The sequence spans 999 residues: Transcription-repair-coupling factor (999 aa).

The 158-residue stretch at 499 to 656 (DLSSHRVMDR…LSQIKGISSL (158 aa)) folds into the Helicase ATP-binding domain. An ATP-binding site is contributed by 512-519 (GDVGFGKT). The DEEH box signature appears at 609-612 (DEEH). In terms of domain architecture, Helicase C-terminal spans 677-833 (LLKEIIYREL…SVAYHDLEIR (157 aa)).

The protein in the N-terminal section; belongs to the UvrB family. It in the C-terminal section; belongs to the helicase family. RecG subfamily.

It localises to the cytoplasm. Functionally, couples transcription and DNA repair by recognizing RNA polymerase (RNAP) stalled at DNA lesions. Mediates ATP-dependent release of RNAP and its truncated transcript from the DNA, and recruitment of nucleotide excision repair machinery to the damaged site. This chain is Transcription-repair-coupling factor, found in Helicobacter pylori (strain ATCC 700392 / 26695) (Campylobacter pylori).